We begin with the raw amino-acid sequence, 360 residues long: Phospho-N-acetylmuramoyl-pentapeptide-transferase (360 aa).

Helical transmembrane passes span 26 to 46, 72 to 92, 94 to 114, 132 to 152, 168 to 188, 199 to 219, 236 to 256, 263 to 283, 288 to 308, and 338 to 358; these read AIVSLLTALFISLWMGPRMIA, PTMGGIMILTSITVSVLLWAY, SNPYVWCVLFVLVGYGIVGFV, WKYFWQSAIALVVAFVMYMIG, VMPQLGLLYLLLAYFVIVGTS, GLAIMPTVFVAAGFALVAWAT, AGELVIVCTAIVGAGLGFLWF, VFMGDVGSLALGGALGTIAVL, FLLVIMGGVFVVETLSVILQV, and VIVRFWIISLMLVLIGLATLK.

This sequence belongs to the glycosyltransferase 4 family. MraY subfamily. Mg(2+) is required as a cofactor.

Its subcellular location is the cell inner membrane. It carries out the reaction UDP-N-acetyl-alpha-D-muramoyl-L-alanyl-gamma-D-glutamyl-meso-2,6-diaminopimeloyl-D-alanyl-D-alanine + di-trans,octa-cis-undecaprenyl phosphate = di-trans,octa-cis-undecaprenyl diphospho-N-acetyl-alpha-D-muramoyl-L-alanyl-D-glutamyl-meso-2,6-diaminopimeloyl-D-alanyl-D-alanine + UMP. It functions in the pathway cell wall biogenesis; peptidoglycan biosynthesis. Functionally, catalyzes the initial step of the lipid cycle reactions in the biosynthesis of the cell wall peptidoglycan: transfers peptidoglycan precursor phospho-MurNAc-pentapeptide from UDP-MurNAc-pentapeptide onto the lipid carrier undecaprenyl phosphate, yielding undecaprenyl-pyrophosphoryl-MurNAc-pentapeptide, known as lipid I. This chain is Phospho-N-acetylmuramoyl-pentapeptide-transferase, found in Erwinia tasmaniensis (strain DSM 17950 / CFBP 7177 / CIP 109463 / NCPPB 4357 / Et1/99).